The chain runs to 1157 residues: Pesticidal crystal protein Cry9Ca (1157 aa).

It belongs to the delta endotoxin family.

Functionally, promotes colloidosmotic lysis by binding to the midgut epithelial cells of Lepidoptera larvae. Has a fairly broad spectrum of activity against members of the Pyralidae, Plutellidae, Sphingidae and Noctuidae families. It was the first insecticidal crystal protein characterized with activity against cutworms. No activity is observed against some beetles, such as the Colorado potato beetle. In Bacillus thuringiensis subsp. tolworthi, this protein is Pesticidal crystal protein Cry9Ca (cry9Ca).